A 539-amino-acid polypeptide reads, in one-letter code: MAKTLLFGEEARRSMQAGVDKLANTVKVTLGPKGRNVILDKKFGSPLITNDGVTIAREIELEDAYENMGAQLVKEVATKTNDVAGDGTTTATLLAQAIIREGLKNVTAGANPILIRNGIKTAVEKAVEEIQKISKPVNGKEDIARVAAISAADEKIGKLIADAMEKVGNEGVITVEESKSMGTELDVVEGMQFDRGYVSAYMVTDTEKMEAVLDNPLVLITDKKISNIQDLLPLLEQIVQAGKKLLIIADDIEGEAMTTLVVNKLRGTFTCVGVKAPGFGDRRKEMLQDIATLTGGVVISDEVGGDLKEATLDMLGEAESVKVTKESTTIVNGRGNSEEIKNRVNQIKLQLEATTSEFDKEKLQERLAKLAGGVAVVKVGAATETELKESKLRIEDALAATKAAVEEGIVPGGGTAYVNVINEVAKLTSDIQDEQVGINIIVRSLEEPMRQIAHNAGLEGSVIIEKVKNSDAGVGFDALRGEYKDMIKAGIVDPTKVTRSALQNAASVASTFLTTEAAVADIPEKEMPQGAGMGMDGMY.

ATP is bound by residues 29 to 32 (TLGP), 86 to 90 (DGTTT), glycine 413, 477 to 479 (DAL), and aspartate 493.

Belongs to the chaperonin (HSP60) family. In terms of assembly, forms a cylinder of 14 subunits composed of two heptameric rings stacked back-to-back. Interacts with the co-chaperonin GroES.

Its subcellular location is the cytoplasm. It carries out the reaction ATP + H2O + a folded polypeptide = ADP + phosphate + an unfolded polypeptide.. Its function is as follows. Together with its co-chaperonin GroES, plays an essential role in assisting protein folding. The GroEL-GroES system forms a nano-cage that allows encapsulation of the non-native substrate proteins and provides a physical environment optimized to promote and accelerate protein folding. The sequence is that of Chaperonin GroEL from Clostridium perfringens (strain 13 / Type A).